The sequence spans 838 residues: Tape measure protein (838 aa).

The tract at residues 378–397 (ARANEENASREAAAESDRQK) is disordered. Residues 380–397 (ANEENASREAAAESDRQK) show a composition bias toward basic and acidic residues. Residues 399-419 (AAQAQANYAKTQTALEKYTAR) are a coiled coil.

This sequence belongs to the Lambdavirus tape measure protein family. Interacts with the tail initiator complex presumably through its C-terminus domain. Interacts with the tail assembly proteins.

The protein localises to the virion. Functionally, serves as a ruler that controls the length of tail by stopping the tail tube polymerization and is probably released from the tail shaft during infection to facilitate DNA translocation into the host cell. Assembles into a multimeric linear form probably arranged as a coil of alpha-helices and stabilized by the covering tail assembly proteins. Its C-terminus fixes the tail tip complex, thereby forming the tail assembly initiator complex. Tail tube proteins polymerize around the tape measure protein, displacing the tail assembly proteins. When the tail reaches the length specified by the tape measure protein, it stops and becomes capped by the tail terminator protein. The polypeptide is Tape measure protein (Escherichia coli (Bacteriophage N15)).